Consider the following 518-residue polypeptide: Probable thiamine biosynthetic bifunctional enzyme (518 aa).

The segment at 1 to 229 (MKRQIDYSLY…ATPPCFAQAR (229 aa)) is thiamine-phosphate synthase. 4-amino-2-methyl-5-(diphosphooxymethyl)pyrimidine is bound by residues 40 to 44 (QHREK) and asparagine 72. Positions 73 and 92 each coordinate Mg(2+). Serine 111 contributes to the 4-amino-2-methyl-5-(diphosphooxymethyl)pyrimidine binding site. 137–139 (TNT) contributes to the 2-[(2R,5Z)-2-carboxy-4-methylthiazol-5(2H)-ylidene]ethyl phosphate binding site. Lysine 140 lines the 4-amino-2-methyl-5-(diphosphooxymethyl)pyrimidine pocket. Residues glycine 173 and 199 to 200 (VS) each bind 2-[(2R,5Z)-2-carboxy-4-methylthiazol-5(2H)-ylidene]ethyl phosphate. Residues 230–518 (SSLTTPKDLL…IERAKLEKAE (289 aa)) are hydroxyethylthiazole kinase. Methionine 281 is a binding site for 5-(2-hydroxyethyl)-4-methylthiazole. Residues lysine 355 and serine 403 each coordinate ATP. Alanine 430 provides a ligand contact to 5-(2-hydroxyethyl)-4-methylthiazole. Cysteine 433 functions as the Proton acceptor; for hydroxyethylthiazole kinase activity in the catalytic mechanism.

In the N-terminal section; belongs to the thiamine-phosphate synthase family. It in the C-terminal section; belongs to the Thz kinase family. The cofactor is Mg(2+).

The enzyme catalyses 2-[(2R,5Z)-2-carboxy-4-methylthiazol-5(2H)-ylidene]ethyl phosphate + 4-amino-2-methyl-5-(diphosphooxymethyl)pyrimidine + 2 H(+) = thiamine phosphate + CO2 + diphosphate. The catalysed reaction is 2-(2-carboxy-4-methylthiazol-5-yl)ethyl phosphate + 4-amino-2-methyl-5-(diphosphooxymethyl)pyrimidine + 2 H(+) = thiamine phosphate + CO2 + diphosphate. It carries out the reaction 4-methyl-5-(2-phosphooxyethyl)-thiazole + 4-amino-2-methyl-5-(diphosphooxymethyl)pyrimidine + H(+) = thiamine phosphate + diphosphate. It catalyses the reaction 5-(2-hydroxyethyl)-4-methylthiazole + ATP = 4-methyl-5-(2-phosphooxyethyl)-thiazole + ADP + H(+). The protein operates within cofactor biosynthesis; thiamine diphosphate biosynthesis; 4-methyl-5-(2-phosphoethyl)-thiazole from 5-(2-hydroxyethyl)-4-methylthiazole: step 1/1. It participates in cofactor biosynthesis; thiamine diphosphate biosynthesis; thiamine phosphate from 4-amino-2-methyl-5-diphosphomethylpyrimidine and 4-methyl-5-(2-phosphoethyl)-thiazole: step 1/1. Its function is as follows. Condenses 4-methyl-5-(beta-hydroxyethyl)thiazole monophosphate (THZ-P) and 2-methyl-4-amino-5-hydroxymethyl pyrimidine pyrophosphate (HMP-PP) to form thiamine monophosphate (TMP). This is Probable thiamine biosynthetic bifunctional enzyme (thi4) from Schizosaccharomyces pombe (strain 972 / ATCC 24843) (Fission yeast).